A 212-amino-acid chain; its full sequence is Peptide methionine sulfoxide reductase MsrA (212 aa).

The span at 1-14 (MNSIDKTQRITQSD) shows a compositional bias: polar residues. A disordered region spans residues 1-21 (MNSIDKTQRITQSDALPGRST). Cysteine 52 is a catalytic residue.

This sequence belongs to the MsrA Met sulfoxide reductase family.

The enzyme catalyses L-methionyl-[protein] + [thioredoxin]-disulfide + H2O = L-methionyl-(S)-S-oxide-[protein] + [thioredoxin]-dithiol. It carries out the reaction [thioredoxin]-disulfide + L-methionine + H2O = L-methionine (S)-S-oxide + [thioredoxin]-dithiol. Functionally, has an important function as a repair enzyme for proteins that have been inactivated by oxidation. Catalyzes the reversible oxidation-reduction of methionine sulfoxide in proteins to methionine. The sequence is that of Peptide methionine sulfoxide reductase MsrA from Pectobacterium atrosepticum (strain SCRI 1043 / ATCC BAA-672) (Erwinia carotovora subsp. atroseptica).